The following is a 39-amino-acid chain: Cytochrome b559 subunit beta (39 aa).

Residues 14–30 (WLAVHGLAIPTVFFLGS) traverse the membrane as a helical segment. His18 contributes to the heme binding site.

It belongs to the PsbE/PsbF family. Heterodimer of an alpha subunit and a beta subunit. PSII is composed of 1 copy each of membrane proteins PsbA, PsbB, PsbC, PsbD, PsbE, PsbF, PsbH, PsbI, PsbJ, PsbK, PsbL, PsbM, PsbT, PsbX, PsbY, PsbZ, Psb30/Ycf12, at least 3 peripheral proteins of the oxygen-evolving complex and a large number of cofactors. It forms dimeric complexes. The cofactor is heme b.

The protein localises to the plastid membrane. Functionally, this b-type cytochrome is tightly associated with the reaction center of photosystem II (PSII). PSII is a light-driven water:plastoquinone oxidoreductase that uses light energy to abstract electrons from H(2)O, generating O(2) and a proton gradient subsequently used for ATP formation. It consists of a core antenna complex that captures photons, and an electron transfer chain that converts photonic excitation into a charge separation. This Cuscuta gronovii (Common dodder) protein is Cytochrome b559 subunit beta.